The chain runs to 33 residues: Ranatuerin-1T (33 aa).

A disulfide bridge links cysteine 27 with cysteine 33.

As to expression, expressed by the skin glands.

The protein localises to the secreted. Functionally, antibacterial activity against Gram-positive bacterium S.aureus and Gram-negative bacterium E.coli. No activity against C.albicans. The protein is Ranatuerin-1T of Rana temporaria (European common frog).